The primary structure comprises 185 residues: Ribosome maturation factor RimM (185 aa).

Residues 106–185 (EGDYYWKDLM…SIEVDWDPGF (80 aa)) form the PRC barrel domain.

The protein belongs to the RimM family. In terms of assembly, binds ribosomal protein uS19.

Its subcellular location is the cytoplasm. Its function is as follows. An accessory protein needed during the final step in the assembly of 30S ribosomal subunit, possibly for assembly of the head region. Essential for efficient processing of 16S rRNA. May be needed both before and after RbfA during the maturation of 16S rRNA. It has affinity for free ribosomal 30S subunits but not for 70S ribosomes. The protein is Ribosome maturation factor RimM of Shigella dysenteriae serotype 1 (strain Sd197).